The primary structure comprises 560 residues: SWI/SNF complex subunit SWI3A homolog (560 aa).

Residues 1–13 are compositionally biased toward low complexity; sequence MSPPVAGAASSGD. Positions 1–22 are disordered; it reads MSPPVAGAASSGDGPPGRPPRE. Positions 24–127 constitute an SWIRM domain; that stretch reads YTIPASSGWF…FSASPSRPEA (104 aa). In terms of domain architecture, SANT spans 242-293; that stretch reads HSSSAWTDAETLLLLEGVLKHGDDWDLIAQHVRTKNKSECIARLIQLPFGEH. A compositionally biased stretch (polar residues) spans 311 to 330; the sequence is TTDGKVNKSTVKESSSQPTE. 2 disordered regions span residues 311–352 and 414–445; these read TTDG…EEHP and QTRAFSSNHARQSDDVGGGDRDVEMHGHPDKK. Positions 331–342 are enriched in acidic residues; sequence TVDDMQIDGNED. Basic and acidic residues-rich tracts occupy residues 343–352 and 424–445; these read GADKSVEEHP and RQSDDVGGGDRDVEMHGHPDKK.

Interacts with LFR.

The protein resides in the nucleus. In terms of biological role, component of a multiprotein complex equivalent of the SWI/SNF complex, an ATP-dependent chromatin-remodeling complex, which is required for the positive and negative regulation of gene expression of a large number of genes. It changes chromatin structure by altering DNA-histone contacts within a nucleosome, leading eventually to a change in nucleosome position, thus facilitating or repressing binding of gene-specific transcription factors. The sequence is that of SWI/SNF complex subunit SWI3A homolog from Oryza sativa subsp. japonica (Rice).